Reading from the N-terminus, the 242-residue chain is Phosphoribosylaminoimidazole-succinocarboxamide synthase (242 aa).

Belongs to the SAICAR synthetase family.

The catalysed reaction is 5-amino-1-(5-phospho-D-ribosyl)imidazole-4-carboxylate + L-aspartate + ATP = (2S)-2-[5-amino-1-(5-phospho-beta-D-ribosyl)imidazole-4-carboxamido]succinate + ADP + phosphate + 2 H(+). It participates in purine metabolism; IMP biosynthesis via de novo pathway; 5-amino-1-(5-phospho-D-ribosyl)imidazole-4-carboxamide from 5-amino-1-(5-phospho-D-ribosyl)imidazole-4-carboxylate: step 1/2. The protein is Phosphoribosylaminoimidazole-succinocarboxamide synthase of Prochlorococcus marinus subsp. pastoris (strain CCMP1986 / NIES-2087 / MED4).